A 220-amino-acid chain; its full sequence is Nucleolar protein 12 (220 aa).

Residues 31–86 (HKRKMQRRKTAVEEIKRKIKEEQKKMKEERHKEYMKMLKEREEALCELEENDELEE) adopt a coiled-coil conformation. The segment at 109–220 (ISDLDLSGIR…QTGKTRRRRN (112 aa)) is disordered. Residues 139–148 (EKGADEEKPK) are compositionally biased toward basic and acidic residues. Composition is skewed to basic residues over residues 176-186 (RSQRKSGKRPS) and 205-220 (KTQRRKQTGKTRRRRN).

The protein belongs to the RRP17 family.

The protein resides in the nucleus. The protein localises to the nucleolus. In terms of biological role, may bind to rRNA. The polypeptide is Nucleolar protein 12 (nol12) (Xenopus laevis (African clawed frog)).